The primary structure comprises 301 residues: ATP synthase gamma chain (301 aa).

This sequence belongs to the ATPase gamma chain family. In terms of assembly, F-type ATPases have 2 components, CF(1) - the catalytic core - and CF(0) - the membrane proton channel. CF(1) has five subunits: alpha(3), beta(3), gamma(1), delta(1), epsilon(1). CF(0) has three main subunits: a, b and c.

The protein localises to the cell inner membrane. Produces ATP from ADP in the presence of a proton gradient across the membrane. The gamma chain is believed to be important in regulating ATPase activity and the flow of protons through the CF(0) complex. This is ATP synthase gamma chain from Helicobacter pylori (strain HPAG1).